The following is a 904-amino-acid chain: Phosphoenolpyruvate carboxylase (904 aa).

The tract at residues 52–71 (ISRRESDAPPSTLSEQLTGR) is disordered. Catalysis depends on residues His-151 and Lys-570.

Belongs to the PEPCase type 1 family. Requires Mg(2+) as cofactor.

It carries out the reaction oxaloacetate + phosphate = phosphoenolpyruvate + hydrogencarbonate. Functionally, forms oxaloacetate, a four-carbon dicarboxylic acid source for the tricarboxylic acid cycle. In Xanthomonas oryzae pv. oryzae (strain MAFF 311018), this protein is Phosphoenolpyruvate carboxylase.